The following is a 362-amino-acid chain: UDP-N-acetylglucosamine--N-acetylmuramyl-(pentapeptide) pyrophosphoryl-undecaprenol N-acetylglucosamine transferase (362 aa).

Residues 15–17 (TGG), Asn127, Arg165, Ser191, Ile247, 266–271 (ALTVSE), and Gln292 each bind UDP-N-acetyl-alpha-D-glucosamine.

This sequence belongs to the glycosyltransferase 28 family. MurG subfamily.

The protein resides in the cell inner membrane. It carries out the reaction di-trans,octa-cis-undecaprenyl diphospho-N-acetyl-alpha-D-muramoyl-L-alanyl-D-glutamyl-meso-2,6-diaminopimeloyl-D-alanyl-D-alanine + UDP-N-acetyl-alpha-D-glucosamine = di-trans,octa-cis-undecaprenyl diphospho-[N-acetyl-alpha-D-glucosaminyl-(1-&gt;4)]-N-acetyl-alpha-D-muramoyl-L-alanyl-D-glutamyl-meso-2,6-diaminopimeloyl-D-alanyl-D-alanine + UDP + H(+). The protein operates within cell wall biogenesis; peptidoglycan biosynthesis. Cell wall formation. Catalyzes the transfer of a GlcNAc subunit on undecaprenyl-pyrophosphoryl-MurNAc-pentapeptide (lipid intermediate I) to form undecaprenyl-pyrophosphoryl-MurNAc-(pentapeptide)GlcNAc (lipid intermediate II). This is UDP-N-acetylglucosamine--N-acetylmuramyl-(pentapeptide) pyrophosphoryl-undecaprenol N-acetylglucosamine transferase from Shewanella baltica (strain OS155 / ATCC BAA-1091).